We begin with the raw amino-acid sequence, 305 residues long: UPF0450 protein C17orf58 homolog (305 aa).

Residues 1 to 22 (MTARALWLLCLIVGWSPEAPVA) form the signal peptide. Residues 18–160 (EAPVAERKAP…DREPETQSCA (143 aa)) are disordered. Residues 21-39 (VAERKAPPPHRKPDSRETP) are compositionally biased toward basic and acidic residues. Disulfide bonds link cysteine 159/cysteine 233, cysteine 163/cysteine 237, and cysteine 174/cysteine 304. In terms of domain architecture, NTR spans 159–304 (CARACSADAD…QVRGATHTQC (146 aa)).

The protein belongs to the UPF0450 family.

The sequence is that of UPF0450 protein C17orf58 homolog from Mus musculus (Mouse).